A 947-amino-acid polypeptide reads, in one-letter code: Protein NETWORKED 2D (947 aa).

In terms of domain architecture, NAB spans 10-90; sequence YSWWWASHIR…ERYDHISTEL (81 aa). Coiled-coil stretches lie at residues 176 to 205, 247 to 342, and 375 to 433; these read KPEA…SSYE, MTET…HFES, and TALI…VLDK. Disordered regions lie at residues 455 to 555 and 580 to 620; these read NLHE…DKTD and EKQG…GEPD. Residues 474-514 are compositionally biased toward basic and acidic residues; the sequence is PQKDLEGEKRTLDISEEIKEHQKETGEEKKEAPVKSVKFEQ. The span at 525–536 shows a compositional bias: polar residues; that stretch reads TIPSTNPDTVLE. Basic and acidic residues-rich tracts occupy residues 537–555, 580–589, and 610–620; these read STEK…DKTD, EKQGESDKID, and EDQKEKEGEPD. Coiled-coil stretches lie at residues 645 to 684 and 744 to 773; these read RNFK…LLQK and GQIQ…DGSS.

This sequence belongs to the NET family.

Functionally, plant-specific actin binding protein. May be part of a membrane-cytoskeletal adapter complex. The sequence is that of Protein NETWORKED 2D from Arabidopsis thaliana (Mouse-ear cress).